Here is a 347-residue protein sequence, read N- to C-terminus: 3-methyl-2-oxobutanoate hydroxymethyltransferase 1, mitochondrial (347 aa).

The transit peptide at 1–48 (MASSLTRNCSRFSKAISVRFMSNLPENTVYGGPKPQNPNQRVTLTHLR) directs the protein to the mitochondrion. Mg(2+) contacts are provided by Asp-83 and Asp-122. 3-methyl-2-oxobutanoate contacts are provided by residues 83-84 (DS), Asp-122, and Lys-152. Glu-154 is a binding site for Mg(2+). The active-site Proton acceptor is the Glu-222.

The protein belongs to the PanB family. The cofactor is Mg(2+).

Its subcellular location is the mitochondrion. The catalysed reaction is 3-methyl-2-oxobutanoate + (6R)-5,10-methylene-5,6,7,8-tetrahydrofolate + H2O = 2-dehydropantoate + (6S)-5,6,7,8-tetrahydrofolate. Its pathway is cofactor biosynthesis; (R)-pantothenate biosynthesis; (R)-pantoate from 3-methyl-2-oxobutanoate: step 1/2. Catalyzes the reversible reaction in which hydroxymethyl group from 5,10-methylenetetrahydrofolate is transferred onto alpha-ketoisovalerate to form ketopantoate. The protein is 3-methyl-2-oxobutanoate hydroxymethyltransferase 1, mitochondrial (KPHMT1) of Arabidopsis thaliana (Mouse-ear cress).